We begin with the raw amino-acid sequence, 72 residues long: Hydrophobic protein OSR8 (72 aa).

Helical transmembrane passes span 9–29 (FLEILLAIILPPLGVFLRFGC) and 39–59 (LLTILGYVPGIIYAVYVLVAL).

This sequence belongs to the UPF0057 (PMP3) family.

The protein localises to the membrane. The sequence is that of Hydrophobic protein OSR8 (OSR8) from Oryza sativa subsp. japonica (Rice).